The primary structure comprises 369 residues: Septin-5 (369 aa).

Thr13 is subject to Phosphothreonine. Positions 41-314 (KGFDFTLMVA…ENYRAHCIQQ (274 aa)) constitute a Septin-type G domain. The G1 motif stretch occupies residues 51–58 (GESGLGKS). Residues 51-58 (GESGLGKS), Thr85, and Gly111 each bind GTP. The G3 motif stretch occupies residues 108–111 (DTPG). Position 168 is an omega-N-methylarginine (Arg168). A G4 motif region spans residues 189–192 (AKAD). Position 190–198 (190–198 (KADCLVPSE)) interacts with GTP. Ser225 bears the Phosphoserine mark. 2 residues coordinate GTP: Gly248 and Arg263. Ser327 bears the Phosphoserine mark. Thr336 carries the post-translational modification Phosphothreonine. A coiled-coil region spans residues 338–369 (DSETEKLIRMKDEELRRMQEMLQKMKQRMQDQ).

This sequence belongs to the TRAFAC class TrmE-Era-EngA-EngB-Septin-like GTPase superfamily. Septin GTPase family. Septins polymerize into heterooligomeric protein complexes that form filaments, and can associate with cellular membranes, actin filaments and microtubules. GTPase activity is required for filament formation. Interacts with SEPTIN2 and SEPTIN5. In platelets, associated with a complex containing STX4. Interacts with PRKN; this interaction leads to SEPTIN5 ubiquitination and degradation. Interacts with DYRK1A. Interacts with STX1A; in the cerebellar cortex. In terms of processing, phosphorylated by DYRK1A. In terms of tissue distribution, expressed in brain and testis and at lower level in heart, spleen, lung and kidney.

Its subcellular location is the cytoplasm. It is found in the cytoskeleton. Functionally, filament-forming cytoskeletal GTPase. May play a role in cytokinesis (Potential). May play a role in platelet secretion. The protein is Septin-5 of Rattus norvegicus (Rat).